A 320-amino-acid chain; its full sequence is MHMTSPSAKPLVVSIMGPTASGKTATALAIAEQIPSEIISVDSALVYREMNIGTAKPTDEERASVPHHLIDILDPLDAYSVMQFRQDALRLVAEISARGKLALLVGGTMLYFKGLKDGLDALPQADAALRAELDAEAALIGSPAMHAKLAKLDPITAARLKPNDTQRIQRALEIITLTGQPMSALLAQAPKSELPFTLLPIALEPSERSVLHARIATRFDAMLKDGGLLDEVRALRARGDLHPGLPSMRCVGYRQSWEYLDGAYGLAELREKGIAATRQLAKRQLTWLRGMPERQTIDCLAPDVAGSILRKIVSADKVPK.

17–24 (GPTASGKT) contributes to the ATP binding site. A substrate-binding site is contributed by 19-24 (TASGKT). 3 interaction with substrate tRNA regions span residues 42–45 (DSAL), 166–170 (QRIQR), and 249–254 (RCVGYR).

It belongs to the IPP transferase family. As to quaternary structure, monomer. Mg(2+) is required as a cofactor.

It catalyses the reaction adenosine(37) in tRNA + dimethylallyl diphosphate = N(6)-dimethylallyladenosine(37) in tRNA + diphosphate. Catalyzes the transfer of a dimethylallyl group onto the adenine at position 37 in tRNAs that read codons beginning with uridine, leading to the formation of N6-(dimethylallyl)adenosine (i(6)A). The chain is tRNA dimethylallyltransferase from Herminiimonas arsenicoxydans.